We begin with the raw amino-acid sequence, 207 residues long: Protein N-terminal glutamine amidohydrolase (207 aa).

Residues C30, H83, and D99 contribute to the active site.

It belongs to the NTAQ1 family. As to quaternary structure, monomer.

It is found in the cytoplasm. The protein resides in the cytosol. It localises to the nucleus. The enzyme catalyses N-terminal L-glutaminyl-[protein] + H2O = N-terminal L-glutamyl-[protein] + NH4(+). Functionally, mediates the side-chain deamidation of N-terminal glutamine residues to glutamate, an important step in N-end rule pathway of protein degradation. Conversion of the resulting N-terminal glutamine to glutamate renders the protein susceptible to arginylation, polyubiquitination and degradation as specified by the N-end rule. Does not act on substrates with internal or C-terminal glutamine and does not act on non-glutamine residues in any position. Does not deaminate acetylated N-terminal glutamine. With the exception of proline, all tested second-position residues on substrate peptides do not greatly influence the activity. In contrast, a proline at position 2, virtually abolishes deamidation of N-terminal glutamine. The polypeptide is Protein N-terminal glutamine amidohydrolase (NTAQ1) (Bos taurus (Bovine)).